A 124-amino-acid polypeptide reads, in one-letter code: Fluoride-specific ion channel FluC (124 aa).

The next 3 helical transmembrane spans lie at 5–27 (LFVALGGSIGAVFRYLLSIFMLQ), 70–90 (VGLLGALTTFSTFSNETLLLI), and 95–115 (WIKAFFNIALNLCLCIFMVYL). Na(+)-binding residues include Gly-74 and Thr-77.

This sequence belongs to the fluoride channel Fluc/FEX (TC 1.A.43) family.

It localises to the cell inner membrane. The catalysed reaction is fluoride(in) = fluoride(out). With respect to regulation, na(+) is not transported, but it plays an essential structural role and its presence is essential for fluoride channel function. Its function is as follows. Fluoride-specific ion channel. Important for reducing fluoride concentration in the cell, thus reducing its toxicity. The sequence is that of Fluoride-specific ion channel FluC from Shewanella sediminis (strain HAW-EB3).